We begin with the raw amino-acid sequence, 504 residues long: MNVFFMFSLLFLATLGSCADDKNPLEECFREDDYEEFLEIAKNGLKKTSNPKHIVIVGAGMSGLSAAYVLAGAGHKVTVLEASERPGGRVRTHRNVKEGWYANLGPMRVPEKHRIIREYIRKFGLKLNEFVQETENGWYFIKNIRKRVGEVKKDPGLLKYPVKPSEAGKSAGQLYQESLGKAVEELKRTNCSYILNKYDTYSTKEYLIKEGNLSPGAVDMIGDLLNEDSGYYVSFIESLKHDDIFAYEKRFDEIVGGMDQLPTSMYRAIEESVHFKARVIKIQQNAEKVTVTYQTTQKNLLLETADYVIVCTTSRAARRITFKPPLPPKKAHALRSVHYRSGTKIFLTCTKKFWEDDGIQGGKSTTDLPSRFIYYPNHNFTTGVGVIIAYGIGDDANFFQALNLNECADIVFNDLSSIHQLPKKDLQTFCYPSIIQKWSLDKYAMGAITTFTPYQFQHFSEALTAPVGRIFFAGEYTANAHGWIDSTIKSGLTAARDVNRASEL.

The N-terminal stretch at 1 to 18 (MNVFFMFSLLFLATLGSC) is a signal peptide. C28 and C191 are oxidised to a cystine. Residues 61 to 62 (MS), 81 to 82 (EA), R89, and 105 to 108 (GPMR) each bind FAD. Residue R108 participates in substrate binding. N190 is a glycosylation site (N-linked (GlcNAc...) asparagine). H241 contributes to the substrate binding site. V279 contributes to the FAD binding site. C349 and C430 are disulfide-bonded. N-linked (GlcNAc...) asparagine glycosylation occurs at N379. Substrate is bound at residue Y390. FAD contacts are provided by residues E475 and 482–487 (GWIDST). A substrate-binding site is contributed by 482-483 (GW).

It belongs to the flavin monoamine oxidase family. FIG1 subfamily. In terms of assembly, homodimer; non-covalently linked. FAD serves as cofactor. Expressed by the venom gland.

It is found in the secreted. The enzyme catalyses an L-alpha-amino acid + O2 + H2O = a 2-oxocarboxylate + H2O2 + NH4(+). It carries out the reaction L-leucine + O2 + H2O = 4-methyl-2-oxopentanoate + H2O2 + NH4(+). The catalysed reaction is L-phenylalanine + O2 + H2O = 3-phenylpyruvate + H2O2 + NH4(+). It catalyses the reaction L-tryptophan + O2 + H2O = indole-3-pyruvate + H2O2 + NH4(+). The enzyme catalyses L-methionine + O2 + H2O = 4-methylsulfanyl-2-oxobutanoate + H2O2 + NH4(+). It carries out the reaction L-tyrosine + O2 + H2O = 3-(4-hydroxyphenyl)pyruvate + H2O2 + NH4(+). Functionally, catalyzes an oxidative deamination of predominantly hydrophobic and aromatic L-amino acids, thus producing hydrogen peroxide that may contribute to the diverse toxic effects of this enzyme. Is highly active on L-Tyr followed by L-Phe, L-Met, L-Leu, L-Trp, and weakly active on L-Ile, L-Arg, L-Val, L-Lys, and L-Ala. Inhibits ADP- and collagen-induced platelet aggregation. This inhibition is inhibited by catalase, indicating the importance of generated H(2)O(2) for the inhibitory effect. This effect on platelets among snake L-amino-acid oxidases is however controversial, since some of them induce aggregation, whereas the other inhibit agonist-induced aggregation. In vivo, this enzyme induces a rapid, substantial and reversible increase in the paw volume of mice (edema). In addition, myofibrosis, and inflammatory cell infiltration on the paw tissue are also observed. This chain is L-amino-acid oxidase, found in Daboia russelii (Russel's viper).